The sequence spans 372 residues: Alpha-parvin (372 aa).

Positions 1–31 (MATSPQKSPLVPKSPTPKSPPSRKKDDSFLG) are disordered. Alanine 2 bears the N-acetylalanine mark. Phosphoserine is present on residues serine 8, serine 14, and serine 19. Residues 21–25 (PSRKK) are interaction with ARHGAP31. Residues serine 28 and serine 62 each carry the phosphoserine modification. Calponin-homology (CH) domains are found at residues 95–202 (QELM…QYFR) and 262–369 (NVVK…TKYR). The tract at residues 223 to 372 (GILQSRQIQE…NLFTKYRNVE (150 aa)) is required for interaction with TESK1 and ILK.

This sequence belongs to the parvin family. As to quaternary structure, component of the heterotrimeric IPP (ILK-PINCH-PARVIN) complex composed of ILK, LIMS1/PINCH and PARVA; the complex binds to F-actin via the C-terminal tail of LIMS1 and the N-terminal region of PARVA, promoting F-actin filament bundling. Interacts with TGFB1I1. Interacts with ARHGAP31. Interacts with the actin cytoskeleton. Interacts (via C-terminus) with TESK1 (via C-terminus); the interaction inhibits TESK1 kinase activity. Interacts with PXN/PAXILLIN (via LD motif 4).

The protein localises to the cell junction. It localises to the focal adhesion. It is found in the cell membrane. Its subcellular location is the cytoplasm. The protein resides in the cytoskeleton. The protein localises to the myofibril. It localises to the sarcomere. It is found in the z line. Plays a role in sarcomere organization and in smooth muscle cell contraction. Required for normal development of the embryonic cardiovascular system, and for normal septation of the heart outflow tract. Plays a role in sprouting angiogenesis and is required for normal adhesion of vascular smooth muscle cells to endothelial cells during blood vessel development. Plays a role in the reorganization of the actin cytoskeleton, formation of lamellipodia and ciliogenesis. Plays a role in the establishment of cell polarity, cell adhesion, cell spreading, and directed cell migration. Within the IPP (ILK-PINCH-PARVIN) complex, binds to F-actin, promoting F-actin bundling, a process required to generate force for actin cytoskeleton reorganization and subsequent dynamic cell adhesion events such as cell spreading and migration. In Mus musculus (Mouse), this protein is Alpha-parvin (Parva).